The primary structure comprises 188 residues: Elongation factor P (188 aa).

Belongs to the elongation factor P family.

Its subcellular location is the cytoplasm. The protein operates within protein biosynthesis; polypeptide chain elongation. Functionally, involved in peptide bond synthesis. Stimulates efficient translation and peptide-bond synthesis on native or reconstituted 70S ribosomes in vitro. Probably functions indirectly by altering the affinity of the ribosome for aminoacyl-tRNA, thus increasing their reactivity as acceptors for peptidyl transferase. This Mycoplasmoides gallisepticum (strain R(low / passage 15 / clone 2)) (Mycoplasma gallisepticum) protein is Elongation factor P.